Reading from the N-terminus, the 305-residue chain is Mitochondrial uncoupling protein 2 (305 aa).

Solcar repeat units lie at residues 10–104 (ISFL…VKTL), 114–205 (IPLY…IKET), and 214–297 (DSVL…VKKV). 6 helical membrane passes run 16-36 (FICSAFAACFAELCTIPLDTA), 73-93 (ISGLWKGVIAGLHRQCIYGGL), 120-140 (ILAALLTGAIAIIVANPTDLV), 179-199 (TGLGPNIARNAIVNAAELASY), 220-240 (LLAGLAAGFFAVCIGSPIDVV), and 270-290 (YKGFLPNFTRLGTWNAIMFLT).

It belongs to the mitochondrial carrier (TC 2.A.29) family.

It is found in the mitochondrion inner membrane. PUMPS are mitochondrial transporter proteins that create proton leaks across the inner mitochondrial membrane, thus uncoupling oxidative phosphorylation. This leads to a decrease in the efficiency of oxidative phosphorylation and an increase in heat production. May be involved in protecting plant cells against oxidative stress damage. This Arabidopsis thaliana (Mouse-ear cress) protein is Mitochondrial uncoupling protein 2 (PUMP2).